A 379-amino-acid polypeptide reads, in one-letter code: Cytochrome b (379 aa).

4 consecutive transmembrane segments (helical) span residues Phe-33–Met-53, Trp-77–Val-98, Trp-113–Leu-133, and Phe-178–Leu-198. Residues His-83 and His-97 each contribute to the heme b site. Heme b contacts are provided by His-182 and His-196. His-201 provides a ligand contact to a ubiquinone. Transmembrane regions (helical) follow at residues Ile-226–Phe-246, Leu-288–Asn-308, Ile-320–Gly-340, and Phe-347–Pro-367.

The protein belongs to the cytochrome b family. The cytochrome bc1 complex contains 11 subunits: 3 respiratory subunits (MT-CYB, CYC1 and UQCRFS1), 2 core proteins (UQCRC1 and UQCRC2) and 6 low-molecular weight proteins (UQCRH/QCR6, UQCRB/QCR7, UQCRQ/QCR8, UQCR10/QCR9, UQCR11/QCR10 and a cleavage product of UQCRFS1). This cytochrome bc1 complex then forms a dimer. Heme b serves as cofactor.

The protein resides in the mitochondrion inner membrane. In terms of biological role, component of the ubiquinol-cytochrome c reductase complex (complex III or cytochrome b-c1 complex) that is part of the mitochondrial respiratory chain. The b-c1 complex mediates electron transfer from ubiquinol to cytochrome c. Contributes to the generation of a proton gradient across the mitochondrial membrane that is then used for ATP synthesis. The protein is Cytochrome b (MT-CYB) of Akodon dolores (Dolorous grass mouse).